We begin with the raw amino-acid sequence, 800 residues long: Chondroitin sulfate synthase 1 (800 aa).

Topologically, residues 1 to 7 are cytoplasmic; sequence MAARGRR. The chain crosses the membrane as a helical; Signal-anchor for type II membrane protein span at residues 8–28; the sequence is AWLSMLLGLVLGFVLASRLVL. Over 29–800 the chain is Lumenal; that stretch reads PRASELKRVG…GGSHGSARTA (772 aa). Positions 36-66 are disordered; that stretch reads RVGPRRRPSPEGCRPGQEASQPGGARGDARG. N-linked (GlcNAc...) asparagine glycosylation is found at asparagine 188 and asparagine 622. Aspartate 632 and histidine 746 together coordinate a divalent metal cation.

The protein belongs to the chondroitin N-acetylgalactosaminyltransferase family. It depends on Co(2+) as a cofactor. Mn(2+) serves as cofactor. The cofactor is Cd(2+).

It localises to the golgi apparatus. It is found in the golgi stack membrane. The protein localises to the secreted. The catalysed reaction is 3-O-(beta-D-GlcA-(1-&gt;3)-beta-D-GalNAc-(1-&gt;4)-beta-D-GlcA-(1-&gt;3)-beta-D-Gal-(1-&gt;3)-beta-D-Gal-(1-&gt;4)-beta-D-Xyl)-L-seryl-[protein] + UDP-N-acetyl-alpha-D-galactosamine = 3-O-(beta-D-GalNAc-(1-&gt;4)-beta-D-GlcA-(1-&gt;3)-beta-D-GalNAc-(1-&gt;4)-beta-D-GlcA-(1-&gt;3)-beta-D-Gal-(1-&gt;3)-beta-D-Gal-(1-&gt;4)-beta-D-Xyl)-L-seryl-[protein] + UDP + H(+). It catalyses the reaction 3-O-{beta-D-GlcA-(1-&gt;3)-[beta-D-GalNAc-(1-&gt;4)-beta-D-GlcA-(1-&gt;3)](n)-beta-D-GalNAc-(1-&gt;4)-beta-D-GlcA-(1-&gt;3)-beta-D-Gal-(1-&gt;3)-beta-D-Gal-(1-&gt;4)-beta-D-Xyl}-L-seryl-[protein] + UDP-N-acetyl-alpha-D-galactosamine = 3-O-{[beta-D-GalNAc-(1-&gt;4)-beta-D-GlcA-(1-&gt;3)](n+1)-beta-D-GalNAc-(1-&gt;4)-beta-D-GlcA-(1-&gt;3)-beta-D-Gal-(1-&gt;3)-beta-D-Gal-(1-&gt;4)-beta-D-Xyl}-L-seryl-[protein] + UDP + H(+). It carries out the reaction 3-O-(beta-D-GalNAc-(1-&gt;4)-beta-D-GlcA-(1-&gt;3)-beta-D-Gal-(1-&gt;3)-beta-D-Gal-(1-&gt;4)-beta-D-Xyl)-L-seryl-[protein] + UDP-alpha-D-glucuronate = 3-O-(beta-D-GlcA-(1-&gt;3)-beta-D-GalNAc-(1-&gt;4)-beta-D-GlcA-(1-&gt;3)-beta-D-Gal-(1-&gt;3)-beta-D-Gal-(1-&gt;4)-beta-D-Xyl)-L-seryl-[protein] + UDP + H(+). The enzyme catalyses 3-O-{[beta-D-GalNAc-(1-&gt;4)-beta-D-GlcA-(1-&gt;3)](n)-beta-D-GalNAc-(1-&gt;4)-beta-D-GlcA-(1-&gt;3)-beta-D-Gal-(1-&gt;3)-beta-D-Gal-(1-&gt;4)-beta-D-Xyl}-L-seryl-[protein] + UDP-alpha-D-glucuronate = 3-O-{beta-D-GlcA-(1-&gt;3)-[beta-D-GalNAc-(1-&gt;4)-beta-D-GlcA-(1-&gt;3)](n)-beta-D-GalNAc-(1-&gt;4)-beta-D-GlcA-(1-&gt;3)-beta-D-Gal-(1-&gt;3)-beta-D-Gal-(1-&gt;4)-beta-D-Xyl}-L-seryl-[protein] + UDP + H(+). Has both beta-1,3-glucuronic acid and beta-1,4-N-acetylgalactosamine transferase activity. Transfers glucuronic acid (GlcUA) from UDP-GlcUA and N-acetylgalactosamine (GalNAc) from UDP-GalNAc to the non-reducing end of the elongating chondroitin polymer. Involved in the negative control of osteogenesis likely through the modulation of NOTCH signaling. The protein is Chondroitin sulfate synthase 1 (Chsy1) of Mus musculus (Mouse).